The primary structure comprises 204 residues: Somatotropin (204 aa).

The first 17 residues, 1–17 (MDKVLFLLFVLSLGVSS), serve as a signal peptide directing secretion. Q18 is modified (pyrrolidone carboxylic acid). Residue H36 coordinates Zn(2+). A disulfide bridge links C69 with C177. E186 lines the Zn(2+) pocket. A disulfide bridge connects residues C194 and C202.

The protein belongs to the somatotropin/prolactin family.

It is found in the secreted. Its function is as follows. Growth hormone plays an important role in growth control and is involved in the regulation of several anabolic processes. Implicated as an osmoregulatory substance important for seawater adaptation. The sequence is that of Somatotropin (gh) from Trichopodus trichopterus (Three spot gourami).